Reading from the N-terminus, the 217-residue chain is Phosphoribosylformylglycinamidine synthase subunit PurQ (217 aa).

The Glutamine amidotransferase type-1 domain maps to 2 to 217 (NIGIIVFPGS…GKSILSTLLS (216 aa)). Catalysis depends on C86, which acts as the Nucleophile. Active-site residues include H194 and E196.

As to quaternary structure, part of the FGAM synthase complex composed of 1 PurL, 1 PurQ and 2 PurS subunits.

Its subcellular location is the cytoplasm. It carries out the reaction N(2)-formyl-N(1)-(5-phospho-beta-D-ribosyl)glycinamide + L-glutamine + ATP + H2O = 2-formamido-N(1)-(5-O-phospho-beta-D-ribosyl)acetamidine + L-glutamate + ADP + phosphate + H(+). The enzyme catalyses L-glutamine + H2O = L-glutamate + NH4(+). Its pathway is purine metabolism; IMP biosynthesis via de novo pathway; 5-amino-1-(5-phospho-D-ribosyl)imidazole from N(2)-formyl-N(1)-(5-phospho-D-ribosyl)glycinamide: step 1/2. Functionally, part of the phosphoribosylformylglycinamidine synthase complex involved in the purines biosynthetic pathway. Catalyzes the ATP-dependent conversion of formylglycinamide ribonucleotide (FGAR) and glutamine to yield formylglycinamidine ribonucleotide (FGAM) and glutamate. The FGAM synthase complex is composed of three subunits. PurQ produces an ammonia molecule by converting glutamine to glutamate. PurL transfers the ammonia molecule to FGAR to form FGAM in an ATP-dependent manner. PurS interacts with PurQ and PurL and is thought to assist in the transfer of the ammonia molecule from PurQ to PurL. This chain is Phosphoribosylformylglycinamidine synthase subunit PurQ, found in Prochlorococcus marinus (strain NATL2A).